The following is a 377-amino-acid chain: MSNGIVIIGSGFAARQLVKNIRKQDASIPLTLIAADSMDEYNKPDLSHVISQGQRADDLTRQTAGEFAGQFNLHLFPHTWVTDIDAEAHVVKSQNNQWQYDKLVLATGASAFVPPVPGRELMLTLNSQQEYRACETQLRDARRVLIVGGGLIGSELAMDFCRAGKAVTLIDNAASILASLMPPEVSSRLQHRLTEMGVHLLLKSQLQGLEKTDSGILATLDHQRSIEVDAVIAATGLRPETALARRAGLTINRGVCVDSYLQTSNDDIYALGDCAEINGQVLPFLQPIQLSAMVLAKNLLGNNTPLKLPAMLVKIKTPELPLHLAGETQRQDLRWQINTERQGMVARGVDDADQLRAFVVSEDRMKEAFGLLKTLPM.

This sequence belongs to the FAD-dependent oxidoreductase family. The cofactor is FAD.

It localises to the cytoplasm. The enzyme catalyses 2 reduced [nitric oxide reductase rubredoxin domain] + NAD(+) + H(+) = 2 oxidized [nitric oxide reductase rubredoxin domain] + NADH. The protein operates within nitrogen metabolism; nitric oxide reduction. One of at least two accessory proteins for anaerobic nitric oxide (NO) reductase. Reduces the rubredoxin moiety of NO reductase. In Shigella sonnei (strain Ss046), this protein is Nitric oxide reductase FlRd-NAD(+) reductase.